Reading from the N-terminus, the 395-residue chain is Acetate kinase (395 aa).

Asn7 provides a ligand contact to Mg(2+). Residue Lys14 coordinates ATP. Arg85 is a binding site for substrate. Asp142 serves as the catalytic Proton donor/acceptor. ATP-binding positions include 202-206 (HLGNG), 277-279 (DMR), and 325-329 (GIGEN). Position 378 (Glu378) interacts with Mg(2+).

It belongs to the acetokinase family. In terms of assembly, homodimer. Requires Mg(2+) as cofactor. Mn(2+) serves as cofactor.

It localises to the cytoplasm. It carries out the reaction acetate + ATP = acetyl phosphate + ADP. The protein operates within metabolic intermediate biosynthesis; acetyl-CoA biosynthesis; acetyl-CoA from acetate: step 1/2. Its function is as follows. Catalyzes the formation of acetyl phosphate from acetate and ATP. Can also catalyze the reverse reaction. The chain is Acetate kinase from Deinococcus geothermalis (strain DSM 11300 / CIP 105573 / AG-3a).